A 175-amino-acid chain; its full sequence is uncharacterized protein (175 aa).

Positions 1–17 are enriched in basic and acidic residues; the sequence is MKVEGGESMHESEEGRD. A disordered region spans residues 1–21; the sequence is MKVEGGESMHESEEGRDVPNG.

This is an uncharacterized protein from Bacillus thuringiensis subsp. kurstaki.